A 165-amino-acid polypeptide reads, in one-letter code: MKTSRLPIAIQQAVMRRLREKLAQANLKLGRNYPEPKLSYTQRGTSAGTAWLESYEIRLNPVLLLENSEAFIEEVVPHELAHLLVWKHFGRVAPHGKEWKWMMESVLGVPARRTHQFELQSVRRNTFPYRCKCQEHQLTVRRHNRVVRGEAVYRCVHCGEQLVAK.

Residues 20–163 enclose the SprT-like domain; sequence EKLAQANLKL…RCVHCGEQLV (144 aa). H78 provides a ligand contact to Zn(2+). The active site involves E79. H82 lines the Zn(2+) pocket.

This sequence belongs to the SprT family. Requires Zn(2+) as cofactor.

It localises to the cytoplasm. This Escherichia coli O127:H6 (strain E2348/69 / EPEC) protein is Protein SprT.